The primary structure comprises 111 residues: Large ribosomal subunit protein uL22 (111 aa).

The protein belongs to the universal ribosomal protein uL22 family. Part of the 50S ribosomal subunit.

Functionally, this protein binds specifically to 23S rRNA; its binding is stimulated by other ribosomal proteins, e.g. L4, L17, and L20. It is important during the early stages of 50S assembly. It makes multiple contacts with different domains of the 23S rRNA in the assembled 50S subunit and ribosome. Its function is as follows. The globular domain of the protein is located near the polypeptide exit tunnel on the outside of the subunit, while an extended beta-hairpin is found that lines the wall of the exit tunnel in the center of the 70S ribosome. This is Large ribosomal subunit protein uL22 from Alkalilimnicola ehrlichii (strain ATCC BAA-1101 / DSM 17681 / MLHE-1).